Reading from the N-terminus, the 2867-residue chain is MEKNVLWVIFYNFLVILLASCNDSNRSKSNSLKSESKSLPTYANLMRNGQDKYNNAKTEDNIGNQINNDNNHNGYNDNRINSEYPKTSHLQHSPSLVHLNDHKFTTKPSRHSYVQRNSIYKRNTNNNMENTNNELHVVPNFFIQEKKAAPQKPSVQNTPTATQIVYNNLDYLNAFDDTNNIISAFKPHHPIIYYFKQLEHFANSYYDLRNKIKDYFALPMKQASDVVEKNVKDCLQNINESRILMTQLENPQNYNDISDKYDEKVKEYKKKIEDMQICLKDSYIKNFKAIMSANLKMNLALNGIYIHWWYLTCSTKTYDDIVKEYAIEINDFDEKKSISFMDNMKKIHKSAIDTLKKMKAELNTSLDSKRTEFIIGEIGHMIEKFNLHLTKIRYASAFIKSIPLQKVESDIYRVELKTLFYVAAKHYADFKFSLEHLKMFENLSKSKEKMLYSTFEKLEGDLLNKINTLMGSEQSTSDLTSIIADSEKIIKSAESLINSSSEEIAKYALDSNEKINEIKKNYDQNILKVREFINKSNGLITSVKGTSQLSESDKQQIETKIEEIKKKKKDILERGKEFINIMNEIKKKKKSNSSNSSTNSKEFTDKLKELETEFEGLNKTVKGYLQEIEDIKVKENEDRSLKNQIEQHLKYTSDNRDNVKTLISKNDEIQKYIEKIEKLINDAPSGKDKFTTEKTNLQNKVKKIIDEFHKEDLQLLLNSLSKFYEEHQKLYNEASTIEKIKDLHQKTKEEYEKLEKMKFSNFGQILDKLNTELDNLKTLEKNIVEEQTNYINKVMSDSLTNLTAEVDNLRSALDGYRADETELKTYKNRINERKEKFLSTLKEQEDDIPDGKNIYEEYNNHKNVMVNKEHKISSDINQCNENIIKAEKNLETFNTLVQTLDAHTGKKDQKVHDLLQKFKTNLEKLNLNELESGFKSLNGSASTTNKQIENIRKNIDTIKSLNFAKNSSESSKLSLENIIKNKADLIKKLDQHTQEIEKHTFIENEEMSPLLSVIKKEKNRVESDMSEELIKQLNTKINAILEYYNKSKDRFNGDDETNLEELDDFKKQCQDAQQEIKKLTTNYNVLDNGINVIIKEQHEKVIILSENHITEKDKKINEKIQQNVNSLNEMKTKLGLLKINEDIKNSRDTTIKSKIQEFEKKVQTIFGSIDVANKKIDAIKKEHDVNKDEFDKEKVKDTSFDEKKKSIEKAYEKMGNTLKELEKMDDEKNIEKEVEEAQIQYKRIFIDHDVNLMNDEVEKSKIVMEKIELYKKEIDEIKQKTNEYKQGDTSNFYYTEQYNSATQSKAKIEQFINIATTKKGTSDTSQDINELESIKEEVHKNLQLVKQESNSMEEMRKQILSMKDLLILNNSETIAKEISNNTQNALGFRENAKTKLNKTDELLQRVAAMIEEAKAHKNNIDIALEDAQIDTEVSKIEQINREIMNKKDEIKSYLSEIKEYKDKCTTEISNSKRGKDKIEFLEKFKPNEESNSNKVNINEINENIRNSEQYLKDIEDAEKQASTKVELFHKHETTISNIFKESEILGVETKSQKKINKAEDIMKEIERHNSEIQTQVKGFQENLNKLNEPHNYDNAEDELNNDKSTNAKVLIETNLESVKHNLSEITNIKQGGEKIYSKAKDIMQKIKATSENTAEKTLEKVKDDQSNYVNYLNQITTERNLIVTEKNRLNGIDSTITNIEGALKESKGNYEIGFLEKLEEIGKNRKLKVDITKKSINSTVGNFSSLFNNFDLNQYDFNKNINDYENKMGEIYNEFEGSLNKISENLRNASENTSDYNSAKTLRLEAQKEKVNLLNKEEEANKYLRDVKKVESFRFIFNMKESLDKINEMIKKEQLTVNEGHGNVKQLVENIKELVDENNLSDILKQATGKNEEIQKITHSTLKNKAKTILGHVDTSAKYVGIKITPELALTELLGDAKLKTAQELKFESKNNVVLETENMSKNTNELDVHKNIQDAYKVALEILAHSDEIDTKQKDSSKLIEMGNQIYLKVVLINQYKNKISSIKSKEEAVSVKIGNVSKKHSELSKITCSDKSYDNIIALEKQTELQNLRNSFTQEKTNTNSDSKLEKIKTDFESLKNALKTLEGEVNALKASSDNHEHVQSKSEPVNPALSEIEKEETDIDSLNTALDELLKKGRTCEVSRYKLIKDTVTKEISDDTELINTIEKNVKAYLAYIKKNYEDTVQDVLTLNEHFNTKQVSNHEPTNFDKSNKSSEELTKAVTDSKTIISKLKGVIIEVNENTEMNTIESSAKEIEALYNELKNKKTSLNEIYQTSNEVKLQEMKSNADKYIDVSKIFNTVLDTQKSNIVTNQHSINNVKDKLKGKLQELIDADSSFTLESIKKFNEIYSHIKTNIGELEQLQQTNKSEHDNVAKHKEKIVHLINRVESLKGDVKNHDDDQYMKKLNASLLNDNIKNTNSINISDEELKKLLKKVEENDQLCKNNNTQNFISDIMKRVEDLNRRFTENLPEKEKLHQIENNYNEISSIFSEINLQDVDEFVAKIHKQIDAEKASVNNVREAEKIRTAIQNVTSYDTEIISRLSEMNNVLERITTRKTKMDQLLKSLSPDNTSLNLNARTHVRKSEDIIKQLNSHIGEITELNTYAHEVMTYLENELNKLLKQLEIERAKLETKTSPSGMKAKEEKVPPKETENRAQDNLASVPQKTLEDNTQQMPENSVQDNLASVPQKTLEDNTHQMPENRVQEDSISAPQEQVEYSTLAVPENDETTEEESEHDDAHDDTHDDTHDDTHDDTHDDTHDDTHDDTHDESQTGRDSTAKEAIGKTRLAGAVIIAMSVLSGFIIIVFKDKDEEEKDHNEHGYNEAFGEHDEYNMHDKEEVIEVCFNEED.

The first 21 residues, 1-21 (MEKNVLWVIFYNFLVILLASC), serve as a signal peptide directing secretion. At 22 to 2805 (NDSNRSKSNS…TAKEAIGKTR (2784 aa)) the chain is on the extracellular side. Disordered stretches follow at residues 52–73 (KYNN…NNHN), 2650–2682 (ETKT…ASVP), and 2712–2799 (DNTH…TAKE). Low complexity predominate over residues 61 to 73 (NIGNQINNDNNHN). A compositionally biased stretch (basic and acidic residues) spans 2659 to 2674 (KAKEEKVPPKETENRA). The segment covering 2725-2736 (DSISAPQEQVEY) has biased composition (polar residues). The segment covering 2743–2754 (ENDETTEEESEH) has biased composition (acidic residues). Residues 2755 to 2799 (DDAHDDTHDDTHDDTHDDTHDDTHDDTHDDTHDESQTGRDSTAKE) are compositionally biased toward basic and acidic residues. Repeat copies occupy residues 2758 to 2761 (HDDT), 2762 to 2765 (HDDT), 2766 to 2769 (HDDT), 2770 to 2773 (HDDT), 2774 to 2777 (HDDT), 2778 to 2781 (HDDT), and 2782 to 2785 (HDDT). Residues 2758-2785 (HDDTHDDTHDDTHDDTHDDTHDDTHDDT) form a 7 X 4 AA tandem repeats of H-D-D-T region. The helical transmembrane segment at 2806–2826 (LAGAVIIAMSVLSGFIIIVFK) threads the bilayer. Residues 2827–2867 (DKDEEEKDHNEHGYNEAFGEHDEYNMHDKEEVIEVCFNEED) are Cytoplasmic-facing.

Its subcellular location is the cell membrane. In terms of biological role, involved in reticulocyte adhesion. Specifically binds to human reticulocyte cells. The polypeptide is Reticulocyte-binding protein 2 (RBP-2) (Plasmodium vivax (strain Belem)).